A 240-amino-acid chain; its full sequence is 1-(5-phosphoribosyl)-5-[(5-phosphoribosylamino)methylideneamino] imidazole-4-carboxamide isomerase (240 aa).

Asp-8 functions as the Proton acceptor in the catalytic mechanism. Residue Asp-129 is the Proton donor of the active site.

The protein belongs to the HisA/HisF family.

It localises to the cytoplasm. The catalysed reaction is 1-(5-phospho-beta-D-ribosyl)-5-[(5-phospho-beta-D-ribosylamino)methylideneamino]imidazole-4-carboxamide = 5-[(5-phospho-1-deoxy-D-ribulos-1-ylimino)methylamino]-1-(5-phospho-beta-D-ribosyl)imidazole-4-carboxamide. It participates in amino-acid biosynthesis; L-histidine biosynthesis; L-histidine from 5-phospho-alpha-D-ribose 1-diphosphate: step 4/9. The chain is 1-(5-phosphoribosyl)-5-[(5-phosphoribosylamino)methylideneamino] imidazole-4-carboxamide isomerase from Herpetosiphon aurantiacus (strain ATCC 23779 / DSM 785 / 114-95).